A 356-amino-acid chain; its full sequence is Magnesium-protoporphyrin IX monomethyl ester [oxidative] cyclase (356 aa).

The protein belongs to the AcsF family. It depends on Fe cation as a cofactor.

It catalyses the reaction Mg-protoporphyrin IX 13-monomethyl ester + 3 NADPH + 3 O2 + 2 H(+) = 3,8-divinyl protochlorophyllide a + 3 NADP(+) + 5 H2O. It functions in the pathway porphyrin-containing compound metabolism; chlorophyll biosynthesis (light-independent). Functionally, catalyzes the formation of the isocyclic ring in chlorophyll biosynthesis. Mediates the cyclase reaction, which results in the formation of divinylprotochlorophyllide (Pchlide) characteristic of all chlorophylls from magnesium-protoporphyrin IX 13-monomethyl ester (MgPMME). The protein is Magnesium-protoporphyrin IX monomethyl ester [oxidative] cyclase of Parasynechococcus marenigrum (strain WH8102).